Here is a 908-residue protein sequence, read N- to C-terminus: DNA mismatch repair protein MutS (908 aa).

Position 662–669 (662–669 (GPNMGGKS)) interacts with ATP.

Belongs to the DNA mismatch repair MutS family.

This protein is involved in the repair of mismatches in DNA. It is possible that it carries out the mismatch recognition step. This protein has a weak ATPase activity. The sequence is that of DNA mismatch repair protein MutS from Rhizobium johnstonii (strain DSM 114642 / LMG 32736 / 3841) (Rhizobium leguminosarum bv. viciae).